The chain runs to 397 residues: Probable peptidoglycan glycosyltransferase FtsW (397 aa).

Topologically, residues Met-1–Thr-30 are cytoplasmic. A helical membrane pass occupies residues Leu-31 to Ile-51. The Periplasmic segment spans residues Pro-52–Pro-61. Residues Phe-62 to Val-82 form a helical membrane-spanning segment. The Cytoplasmic portion of the chain corresponds to Val-83–Asn-94. A helical transmembrane segment spans residues Val-95–Val-115. Topologically, residues Asn-116 to Pro-126 are periplasmic. Residues Ile-127–Phe-146 traverse the membrane as a helical segment. At Tyr-147–Ser-158 the chain is on the cytoplasmic side. The next 2 membrane-spanning stretches (helical) occupy residues Ala-159–Pro-179 and Asp-180–Ala-200. Residue Lys-201 is a topological domain, cytoplasmic. Residues Val-202–Thr-222 traverse the membrane as a helical segment. Residues Ser-223 to Asp-280 lie on the Periplasmic side of the membrane. Residues Phe-281–Leu-301 form a helical membrane-spanning segment. At Leu-302–Gly-325 the chain is on the cytoplasmic side. A helical membrane pass occupies residues Phe-326–Ala-346. Residues Ser-347–Thr-356 lie on the Periplasmic side of the membrane. Residues Phe-357–Leu-377 form a helical membrane-spanning segment. Topologically, residues Leu-378 to Pro-397 are cytoplasmic.

The protein belongs to the SEDS family. FtsW subfamily.

The protein resides in the cell inner membrane. The enzyme catalyses [GlcNAc-(1-&gt;4)-Mur2Ac(oyl-L-Ala-gamma-D-Glu-L-Lys-D-Ala-D-Ala)](n)-di-trans,octa-cis-undecaprenyl diphosphate + beta-D-GlcNAc-(1-&gt;4)-Mur2Ac(oyl-L-Ala-gamma-D-Glu-L-Lys-D-Ala-D-Ala)-di-trans,octa-cis-undecaprenyl diphosphate = [GlcNAc-(1-&gt;4)-Mur2Ac(oyl-L-Ala-gamma-D-Glu-L-Lys-D-Ala-D-Ala)](n+1)-di-trans,octa-cis-undecaprenyl diphosphate + di-trans,octa-cis-undecaprenyl diphosphate + H(+). Its pathway is cell wall biogenesis; peptidoglycan biosynthesis. Its function is as follows. Peptidoglycan polymerase that is essential for cell division. The chain is Probable peptidoglycan glycosyltransferase FtsW from Haemophilus ducreyi (strain 35000HP / ATCC 700724).